We begin with the raw amino-acid sequence, 471 residues long: MNPNQKIICISATGMTLSVVSLLVGIANLGLNIGLHYKVGYTPDVNTPNVNGTNSTTTTIINNNTQNNFTNITNIIQNKNEERTFLNLTKPLCEVNSWHILSKDNAIRIGEDANILVTREPYLSCDPQGCRMFALSQGTTLKGRHANGTIHDRSPFRALVSWEMGQAPSPYNAKIECIGWSSTSCHDGISRMSICMSGPNNNASAVVWYGGRPVTEIPSWAGNILRTQESECVCHKGICPVVMTDGPANNKAATKIIYFKEGKIQKIEELTGTAQHIEECSCYGAKEVIKCICRDNWKGANRPVITIDPDMMTHTSKYLCSKILTDTSRPNDPNNGNCDAPITGGGPDPGVKGFAFLDGENSWLGRTISKDSRSGYEVLKVPNAETNTQSGPITHQIIVNNQNWSGYSGAFIDYWANKECFNPCFYVELIRGRPKESSVLWTSNSIVALCGSRERLGSWSWHDGAEITYFK.

Residues Met1–Lys6 are Intravirion-facing. A helical membrane pass occupies residues Ile7–Ala27. Residues Ser11 to Ile33 are involved in apical transport and lipid raft association. Over Asn28 to Lys471 the chain is Virion surface. The interval His36 to Thr89 is hypervariable stalk region. 6 N-linked (GlcNAc...) asparagine; by host glycosylation sites follow: Asn51, Asn54, Asn63, Asn68, Asn71, and Asn87. Residues Leu92–Lys471 form a head of neuraminidase region. 8 cysteine pairs are disulfide-bonded: Cys93–Cys420, Cys125–Cys130, Cys185–Cys232, Cys234–Cys239, Cys280–Cys293, Cys282–Cys291, Cys320–Cys338, and Cys424–Cys450. Arg119 serves as a coordination point for substrate. The N-linked (GlcNAc...) asparagine; by host glycan is linked to Asn147. Asp152 acts as the Proton donor/acceptor in catalysis. A substrate-binding site is contributed by Arg153. Residue Asn202 is glycosylated (N-linked (GlcNAc...) asparagine; by host). Glu278–Glu279 contacts substrate. Residue Arg294 participates in substrate binding. 3 residues coordinate Ca(2+): Asp295, Gly299, and Asp326. Residue Arg373 coordinates substrate. A glycan (N-linked (GlcNAc...) asparagine; by host) is linked at Asn403. Tyr407 serves as the catalytic Nucleophile.

Belongs to the glycosyl hydrolase 34 family. As to quaternary structure, homotetramer. Requires Ca(2+) as cofactor. Post-translationally, N-glycosylated.

The protein resides in the virion membrane. Its subcellular location is the host apical cell membrane. It carries out the reaction Hydrolysis of alpha-(2-&gt;3)-, alpha-(2-&gt;6)-, alpha-(2-&gt;8)- glycosidic linkages of terminal sialic acid residues in oligosaccharides, glycoproteins, glycolipids, colominic acid and synthetic substrates.. Its activity is regulated as follows. Inhibited by the neuraminidase inhibitors zanamivir (Relenza) and oseltamivir (Tamiflu). These drugs interfere with the release of progeny virus from infected cells and are effective against all influenza strains. Resistance to neuraminidase inhibitors is quite rare. Its function is as follows. Catalyzes the removal of terminal sialic acid residues from viral and cellular glycoconjugates. Cleaves off the terminal sialic acids on the glycosylated HA during virus budding to facilitate virus release. Additionally helps virus spread through the circulation by further removing sialic acids from the cell surface. These cleavages prevent self-aggregation and ensure the efficient spread of the progeny virus from cell to cell. Otherwise, infection would be limited to one round of replication. Described as a receptor-destroying enzyme because it cleaves a terminal sialic acid from the cellular receptors. May facilitate viral invasion of the upper airways by cleaving the sialic acid moieties on the mucin of the airway epithelial cells. Likely to plays a role in the budding process through its association with lipid rafts during intracellular transport. May additionally display a raft-association independent effect on budding. Plays a role in the determination of host range restriction on replication and virulence. Sialidase activity in late endosome/lysosome traffic seems to enhance virus replication. The polypeptide is Neuraminidase (Aves).